Reading from the N-terminus, the 309-residue chain is MTVLHSAPRWSSNEGVLDTLVAALGDMVAASREEHGEILLTVVRDRVEDALRLLRDDHEYQQLMDIAGVDYPQRAERFDVCYCLLSVTKNHRVIVKVSTDEATPVPTVTTLWPNAGWYEREVYDMFGVLFAGNPDLRRILTDYGFQGHPFRKDFPLTGYVELRYSEEDKRVVYEPVQLAQDLRQFDFMSPWEGADYVLPGDEKAVPPPPAPAPVATAPETKGDAKADVPKTTEQPADTGAGEKANDAAAKPVAEAAAPAATKTDEPAAPEPTEDRPARKPRAKKVADTEGATEPAAKPKRTRKKKEDGE.

Residues 198-309 (LPGDEKAVPP…RTRKKKEDGE (112 aa)) are disordered. The span at 220 to 230 (TKGDAKADVPK) shows a compositional bias: basic and acidic residues. Over residues 246–261 (DAAAKPVAEAAAPAAT) the composition is skewed to low complexity.

This sequence belongs to the complex I 30 kDa subunit family. NDH-1 is composed of 14 different subunits. Subunits NuoB, C, D, E, F, and G constitute the peripheral sector of the complex.

Its subcellular location is the cell inner membrane. The enzyme catalyses a quinone + NADH + 5 H(+)(in) = a quinol + NAD(+) + 4 H(+)(out). In terms of biological role, NDH-1 shuttles electrons from NADH, via FMN and iron-sulfur (Fe-S) centers, to quinones in the respiratory chain. The immediate electron acceptor for the enzyme in this species is believed to be ubiquinone. Couples the redox reaction to proton translocation (for every two electrons transferred, four hydrogen ions are translocated across the cytoplasmic membrane), and thus conserves the redox energy in a proton gradient. The chain is NADH-quinone oxidoreductase subunit C from Novosphingobium aromaticivorans (strain ATCC 700278 / DSM 12444 / CCUG 56034 / CIP 105152 / NBRC 16084 / F199).